The following is a 97-amino-acid chain: Mapk-regulated corepressor-interacting protein 1 (97 aa).

Disordered stretches follow at residues 1–29 (MTSSPVSRVVYNGKRPASNTRSPSSNEIF) and 72–97 (SNSLKSFKPIDLNDLKRRTVQDPKKS). Polar residues predominate over residues 17 to 28 (ASNTRSPSSNEI). The segment covering 82-97 (DLNDLKRRTVQDPKKS) has biased composition (basic and acidic residues).

This sequence belongs to the MCRIP family.

It localises to the nucleus. Its subcellular location is the cytoplasm. The protein resides in the stress granule. Functionally, may play a role in the regulation of the epithelial-mesenchymal transition. This chain is Mapk-regulated corepressor-interacting protein 1 (Mcrip1), found in Xenopus tropicalis (Western clawed frog).